Here is a 312-residue protein sequence, read N- to C-terminus: DNA primase small subunit PriS (312 aa).

Catalysis depends on residues Asp88, Asp90, and Asp215.

This sequence belongs to the eukaryotic-type primase small subunit family. In terms of assembly, heterodimer of a small subunit (PriS) and a large subunit (PriL). It depends on Mg(2+) as a cofactor. Mn(2+) serves as cofactor.

Functionally, catalytic subunit of DNA primase, an RNA polymerase that catalyzes the synthesis of short RNA molecules used as primers for DNA polymerase during DNA replication. The small subunit contains the primase catalytic core and has DNA synthesis activity on its own. Binding to the large subunit stabilizes and modulates the activity, increasing the rate of DNA synthesis while decreasing the length of the DNA fragments, and conferring RNA synthesis capability. The DNA polymerase activity may enable DNA primase to also catalyze primer extension after primer synthesis. May also play a role in DNA repair. In Pyrobaculum islandicum (strain DSM 4184 / JCM 9189 / GEO3), this protein is DNA primase small subunit PriS.